The following is a 265-amino-acid chain: MKTTTMSQLRQWKQEKRKFATLTAYDASFAQLFAEQGIQVLLVGDSLGMTLQGFDSTLPVTVADVAYHTRAVRRGAPHCLLLADMPFMSYATPELAFTHAAELMRAGANMVKLEGGSWLCDTIRMLAERAVPVCGHLGLTPQSVNIFGGYKVQGREEVAANQLLQDAIVLEQAGAQLLVLECVPVELAQRVTEELTIPVIGIGAGNVTDGQILVMHDALGITGGHTPKFSKNFLAHSAGDIRAAIKLYIEEVEGGIYPAEEHTFQ.

Residues Asp-45 and Asp-84 each coordinate Mg(2+). 3-methyl-2-oxobutanoate-binding positions include 45-46, Asp-84, and Lys-112; that span reads DS. A Mg(2+)-binding site is contributed by Glu-114. Residue Glu-181 is the Proton acceptor of the active site.

This sequence belongs to the PanB family. As to quaternary structure, homodecamer; pentamer of dimers. Mg(2+) is required as a cofactor.

It localises to the cytoplasm. The enzyme catalyses 3-methyl-2-oxobutanoate + (6R)-5,10-methylene-5,6,7,8-tetrahydrofolate + H2O = 2-dehydropantoate + (6S)-5,6,7,8-tetrahydrofolate. The protein operates within cofactor biosynthesis; (R)-pantothenate biosynthesis; (R)-pantoate from 3-methyl-2-oxobutanoate: step 1/2. In terms of biological role, catalyzes the reversible reaction in which hydroxymethyl group from 5,10-methylenetetrahydrofolate is transferred onto alpha-ketoisovalerate to form ketopantoate. The protein is 3-methyl-2-oxobutanoate hydroxymethyltransferase of Yersinia pseudotuberculosis serotype O:1b (strain IP 31758).